The chain runs to 69 residues: Sec-independent protein translocase protein TatA (69 aa).

A helical membrane pass occupies residues 1–21; that stretch reads MFGKLGMPELVLIFAVALVIF.

The protein belongs to the TatA/E family. As to quaternary structure, forms a complex with TatC.

The protein resides in the cell membrane. In terms of biological role, part of the twin-arginine translocation (Tat) system that transports large folded proteins containing a characteristic twin-arginine motif in their signal peptide across membranes. TatA could form the protein-conducting channel of the Tat system. This is Sec-independent protein translocase protein TatA from Alkaliphilus metalliredigens (strain QYMF).